Consider the following 542-residue polypeptide: Membrane protein insertase YidC (542 aa).

Transmembrane regions (helical) follow at residues 6-26 (NILL…WQTD), 326-346 (LVVD…LLMF), 350-370 (FVGN…GGLY), 421-441 (GGCL…WVLL), 458-478 (LSVQ…MFLM), and 501-521 (VIFT…WLVG).

This sequence belongs to the OXA1/ALB3/YidC family. Type 1 subfamily. Interacts with the Sec translocase complex via SecD. Specifically interacts with transmembrane segments of nascent integral membrane proteins during membrane integration.

The protein resides in the cell inner membrane. Required for the insertion and/or proper folding and/or complex formation of integral membrane proteins into the membrane. Involved in integration of membrane proteins that insert both dependently and independently of the Sec translocase complex, as well as at least some lipoproteins. Aids folding of multispanning membrane proteins. The sequence is that of Membrane protein insertase YidC from Shewanella frigidimarina (strain NCIMB 400).